A 597-amino-acid chain; its full sequence is Gamma-terpinene synthase, chloroplastic (597 aa).

Residues 1–47 (MATLSMQVSILSKQVKNLNSFGMRASKLPMVARRVDVSTTRLRPICS) constitute a chloroplast transit peptide. Mn(2+) contacts are provided by aspartate 350 and aspartate 354. Residues 350-354 (DDVYD) carry the DDXXD motif motif. Homodimerization stretches follow at residues 356-362 (YGTLDEL) and 428-464 (EAKW…YFTL). Positions 494 and 502 each coordinate Mn(2+).

It belongs to the terpene synthase family. Homodimer. It depends on Mn(2+) as a cofactor. Requires Mg(2+) as cofactor.

The protein localises to the plastid. It localises to the chloroplast. It catalyses the reaction (2E)-geranyl diphosphate = gamma-terpinene + diphosphate. It participates in secondary metabolite biosynthesis; terpenoid biosynthesis. Involved in the biosynthesis of phenolic monoterpenes natural products thymol and carvacrol which have a broad range of biological activities acting as antimicrobial compounds, insecticides, antioxidants and pharmaceutical agents. Monoterpene synthase which catalyzes the conversion of geranyl diphosphate (GPP) to gamma-terpinene. This is Gamma-terpinene synthase, chloroplastic from Thymus caespititius (Cretan thyme).